A 199-amino-acid chain; its full sequence is ATP-dependent Clp protease proteolytic subunit (199 aa).

The Nucleophile role is filled by serine 99. Histidine 124 is an active-site residue.

This sequence belongs to the peptidase S14 family. As to quaternary structure, fourteen ClpP subunits assemble into 2 heptameric rings which stack back to back to give a disk-like structure with a central cavity, resembling the structure of eukaryotic proteasomes.

The protein localises to the cytoplasm. It carries out the reaction Hydrolysis of proteins to small peptides in the presence of ATP and magnesium. alpha-casein is the usual test substrate. In the absence of ATP, only oligopeptides shorter than five residues are hydrolyzed (such as succinyl-Leu-Tyr-|-NHMec, and Leu-Tyr-Leu-|-Tyr-Trp, in which cleavage of the -Tyr-|-Leu- and -Tyr-|-Trp bonds also occurs).. In terms of biological role, cleaves peptides in various proteins in a process that requires ATP hydrolysis. Has a chymotrypsin-like activity. Plays a major role in the degradation of misfolded proteins. This chain is ATP-dependent Clp protease proteolytic subunit, found in Moorella thermoacetica (strain ATCC 39073 / JCM 9320).